Here is a 397-residue protein sequence, read N- to C-terminus: Teichoic acid D-alanine hydrolase (397 aa).

A signal peptide spans 1-23; it reads MKFNKVKLVIHACVLLFIIISIA.

It localises to the cell membrane. It catalyses the reaction [(4-D-Ala)-(2-GlcNAc)-Rib-ol-P]n-[Gro-P]m-beta-D-ManNAc-(1-&gt;4)-alpha-D-GlcNAc-P-peptidoglycan + n H2O = [(2-GlcNAc)-Rib-ol-P]n-[Gro-P]m-beta-D-ManNAc-(1-&gt;4)-alpha-D-GlcNAc-P-peptidoglycan + n D-alanine.. In terms of biological role, catalyzes the liberation of D-alanyl moieties present on wall teichoic acid (WTA) and lipoteichoic acid (LTA). Affects the methicillin resistance level and autolysis in the presence of Triton X-100 as well as the cell wall structure. The protein is Teichoic acid D-alanine hydrolase (fmtA) of Staphylococcus aureus (strain Mu50 / ATCC 700699).